A 686-amino-acid polypeptide reads, in one-letter code: Methionine--tRNA ligase (686 aa).

Positions proline 15–histidine 25 match the 'HIGH' region motif. Zn(2+) contacts are provided by cysteine 147, cysteine 150, cysteine 160, and cysteine 163. The 'KMSKS' region signature appears at lysine 336–serine 340. Threonine 339 serves as a coordination point for ATP. The tRNA-binding domain occupies aspartate 584–asparagine 686.

The protein belongs to the class-I aminoacyl-tRNA synthetase family. MetG type 1 subfamily. In terms of assembly, homodimer. It depends on Zn(2+) as a cofactor.

It localises to the cytoplasm. The catalysed reaction is tRNA(Met) + L-methionine + ATP = L-methionyl-tRNA(Met) + AMP + diphosphate. In terms of biological role, is required not only for elongation of protein synthesis but also for the initiation of all mRNA translation through initiator tRNA(fMet) aminoacylation. The protein is Methionine--tRNA ligase of Flavobacterium psychrophilum (strain ATCC 49511 / DSM 21280 / CIP 103535 / JIP02/86).